We begin with the raw amino-acid sequence, 304 residues long: E3 ubiquitin-protein ligase RNF115 (304 aa).

N-acetylalanine is present on Ala-2. The interval 95–138 is disordered; that stretch reads PLDQDNRANERGHQTHTDFWGARPPRLPLGRRYRSRGSSRPDRS. The segment covering 98–110 has biased composition (basic and acidic residues); that stretch reads QDNRANERGHQTH. Ser-132 and Ser-133 each carry phosphoserine; by PKB/AKT1. An RING-type zinc finger spans residues 228 to 269; that stretch reads CPVCKEDYTVEEEVRQLPCNHFFHSSCIVPWLELHDTCPVCR. Residues 272 to 304 are disordered; it reads LNGEDSTRQSQSTEASASNRFSNDSQLHDRWTF. Polar residues predominate over residues 279 to 296; the sequence is RQSQSTEASASNRFSNDS.

In terms of assembly, interacts with RAB7A. Interacts with EGFR and FLT3. Interacts with BST2. Interacts with STX17. Interacts with YWHAE. In terms of processing, phosphorylated by AKT1, allowing association with the 14-3-3 chaperones that facilitates associating with TLRs. Post-translationally, RING-type zinc finger-dependent and E2-dependent autoubiquitination. Deubiquitinated by USP9X; antogonizing its autoubiquitination and subsequent proteasomal degradation. In terms of tissue distribution, expressed at extremely low levels in normal breast, prostate, lung, colon. Higher levels of expression are detected in heart, skeletal muscle, testis as well as in breast and prostate cancer cells.

The protein resides in the cytoplasm. The protein localises to the nucleus. It is found in the endoplasmic reticulum. Its subcellular location is the golgi apparatus. It carries out the reaction S-ubiquitinyl-[E2 ubiquitin-conjugating enzyme]-L-cysteine + [acceptor protein]-L-lysine = [E2 ubiquitin-conjugating enzyme]-L-cysteine + N(6)-ubiquitinyl-[acceptor protein]-L-lysine.. It participates in protein modification; protein ubiquitination. Functionally, E3 ubiquitin-protein ligase that catalyzes the 'Lys-48'- and/or 'Lys-63'-linked polyubiquitination of various substrates and thereby plays a role in a number of signaling pathways including autophagy, innate immunity, cell proliferation and cell death. Plays a role in the endosomal trafficking and degradation of membrane receptors including EGFR, FLT3, MET and CXCR4 through their polyubiquitination. Participates together with BST2 in antiviral immunity by facilitating the internalization of HIV-1 virions into intracellular vesicles leading to their lysosomal degradation. Also possesses an antiviral activity independently of BST2 by promoting retroviral GAG proteins ubiquitination, redistribution to endo-lysosomal compartments and, ultimately, lysosomal degradation. Catalyzes distinct types of ubiquitination on MAVS and STING1 at different phases of viral infection to promote innate antiviral response. Mediates the 'Lys-48'-linked ubiquitination of MAVS leading to its proteasomal degradation and ubiquitinates STING1 via 'Lys-63'-linked polyubiquitination, critical for its oligomerization and the subsequent recruitment of TBK1. Plays a positive role in the autophagosome-lysosome fusion by interacting with STX17 and enhancing its stability without affecting 'Lys-48'- or 'Lys-63'-linked polyubiquitination levels, which in turn promotes autophagosome maturation. Negatively regulates TLR-induced expression of proinflammatory cytokines by catalyzing 'Lys-11'-linked ubiquitination of RAB1A and RAB13 to inhibit post-ER trafficking of TLRs to the Golgi by RAB1A and subsequently from the Golgi apparatus to the cell surface by RAB13. The sequence is that of E3 ubiquitin-protein ligase RNF115 from Homo sapiens (Human).